We begin with the raw amino-acid sequence, 332 residues long: Probable L-asparaginase (332 aa).

An Asparaginase/glutaminase domain is found at 6-332 (PTIALLATGG…AKIQEMFEEY (327 aa)). Residue threonine 16 is the O-isoaspartyl threonine intermediate of the active site. Residues serine 62 and 95–96 (TD) contribute to the substrate site.

It belongs to the asparaginase 1 family.

The protein localises to the cytoplasm. It catalyses the reaction L-asparagine + H2O = L-aspartate + NH4(+). The chain is Probable L-asparaginase (ansA) from Helicobacter pylori (strain J99 / ATCC 700824) (Campylobacter pylori J99).